A 125-amino-acid chain; its full sequence is Small ribosomal subunit protein uS12 (125 aa).

The disordered stretch occupies residues Met-1–Pro-28. A 3-methylthioaspartic acid modification is found at Asp-89. A disordered region spans residues Thr-104–Asp-125.

It belongs to the universal ribosomal protein uS12 family. In terms of assembly, part of the 30S ribosomal subunit. Contacts proteins S8 and S17. May interact with IF1 in the 30S initiation complex.

With S4 and S5 plays an important role in translational accuracy. In terms of biological role, interacts with and stabilizes bases of the 16S rRNA that are involved in tRNA selection in the A site and with the mRNA backbone. Located at the interface of the 30S and 50S subunits, it traverses the body of the 30S subunit contacting proteins on the other side and probably holding the rRNA structure together. The combined cluster of proteins S8, S12 and S17 appears to hold together the shoulder and platform of the 30S subunit. The chain is Small ribosomal subunit protein uS12 from Prochlorococcus marinus subsp. pastoris (strain CCMP1986 / NIES-2087 / MED4).